The primary structure comprises 184 residues: dTTP/UTP pyrophosphatase (184 aa).

Catalysis depends on Asp65, which acts as the Proton acceptor.

This sequence belongs to the Maf family. YhdE subfamily. A divalent metal cation serves as cofactor.

The protein resides in the cytoplasm. It carries out the reaction dTTP + H2O = dTMP + diphosphate + H(+). The catalysed reaction is UTP + H2O = UMP + diphosphate + H(+). Nucleoside triphosphate pyrophosphatase that hydrolyzes dTTP and UTP. May have a dual role in cell division arrest and in preventing the incorporation of modified nucleotides into cellular nucleic acids. The sequence is that of dTTP/UTP pyrophosphatase from Thermococcus onnurineus (strain NA1).